The primary structure comprises 442 residues: Protein bangles and beads (442 aa).

A disordered region spans residues 47–442 (AVEPAPLKPE…SEESSESKEN (396 aa)). 3 stretches are compositionally biased toward basic and acidic residues: residues 55-67 (PEAEKPAETKTIE), 114-125 (PEKKTLPEEAKP), and 133-146 (EAEKKQEKTARTEA). A compositionally biased stretch (low complexity) spans 159–172 (AIEQAPEAPAANAE). Basic and acidic residues-rich tracts occupy residues 177–194 (VVDEVKPQEPKIDAKSAE) and 204–240 (AEKETPVPEQPARQERINEIEQKDAKKDAAVAEEPAK). Composition is skewed to low complexity over residues 241–255 (AAEATPTAAPEAATK) and 272–288 (SSPAAAAASPAAQAAQA). Over residues 329–339 (EAVKEQEKEQP) the composition is skewed to basic and acidic residues. Positions 357–376 (TAAPAGAPEPTAAVAPAAVP) are enriched in low complexity. The span at 408–442 (EPKKSSEEKSDKSESKVDESSESKESEESSESKEN) shows a compositional bias: basic and acidic residues. Phosphoserine is present on residues Ser-430, Ser-433, Ser-436, and Ser-437.

In terms of tissue distribution, expressed in the embryonic CNS, in sets of cells that are segmentally reiterated along the periphery of the nervous system.

May play an important role during development. The chain is Protein bangles and beads (bnb) from Drosophila melanogaster (Fruit fly).